A 202-amino-acid chain; its full sequence is MKRIVIIDYGLGNLRSVQKGLEHAGASPAISGNPEEILAADGIILPGVGAFIDAMKCLVPLKKTIAEFAESGKPMLGICLGQQVLMSSSEEGRLTDGLDLIQGRVLRFPKSELKVPQMGWNNIRVKQDHPLFKGIPDGSFVYFVHSYYVDTAAENTLASCEYGLEYAASVVNSKGNVMGTQFHPEKSGATGLKILRNFVEMC.

The Glutamine amidotransferase type-1 domain occupies 3–202 (RIVIIDYGLG…KILRNFVEMC (200 aa)). The active-site Nucleophile is the Cys79. Residues His183 and Glu185 contribute to the active site.

As to quaternary structure, heterodimer of HisH and HisF.

The protein resides in the cytoplasm. The catalysed reaction is 5-[(5-phospho-1-deoxy-D-ribulos-1-ylimino)methylamino]-1-(5-phospho-beta-D-ribosyl)imidazole-4-carboxamide + L-glutamine = D-erythro-1-(imidazol-4-yl)glycerol 3-phosphate + 5-amino-1-(5-phospho-beta-D-ribosyl)imidazole-4-carboxamide + L-glutamate + H(+). The enzyme catalyses L-glutamine + H2O = L-glutamate + NH4(+). Its pathway is amino-acid biosynthesis; L-histidine biosynthesis; L-histidine from 5-phospho-alpha-D-ribose 1-diphosphate: step 5/9. IGPS catalyzes the conversion of PRFAR and glutamine to IGP, AICAR and glutamate. The HisH subunit catalyzes the hydrolysis of glutamine to glutamate and ammonia as part of the synthesis of IGP and AICAR. The resulting ammonia molecule is channeled to the active site of HisF. The polypeptide is Imidazole glycerol phosphate synthase subunit HisH (Methanosarcina mazei (strain ATCC BAA-159 / DSM 3647 / Goe1 / Go1 / JCM 11833 / OCM 88) (Methanosarcina frisia)).